The chain runs to 286 residues: Apoptosis inhibitor 1 (286 aa).

2 BIR repeats span residues 29-96 (LIER…CAYA) and 131-199 (LQSR…CYFV). The Zn(2+) site is built by C169, C172, H189, and C196. The RING-type zinc-finger motif lies at 238–274 (CKVCLERQRDAVLMPCRHFCVCVQCYFGLDQKCPTCR).

Acts by blocking cellular apoptosis early in infection. Later, stimulates caspase-3-like protease activity and induces apoptosis, probably to favor the release of occluded virions. This Lepidoptera (butterflies and moths) protein is Apoptosis inhibitor 1 (IAP1).